We begin with the raw amino-acid sequence, 122 residues long: Large ribosomal subunit protein uL14 (122 aa).

The protein belongs to the universal ribosomal protein uL14 family. Part of the 50S ribosomal subunit. Forms a cluster with proteins L3 and L19. In the 70S ribosome, L14 and L19 interact and together make contacts with the 16S rRNA in bridges B5 and B8.

Functionally, binds to 23S rRNA. Forms part of two intersubunit bridges in the 70S ribosome. The sequence is that of Large ribosomal subunit protein uL14 from Bartonella quintana (strain Toulouse) (Rochalimaea quintana).